A 429-amino-acid chain; its full sequence is GTPase Obg (429 aa).

One can recognise an Obg domain in the interval 1–158; it reads MLIDKCTLFL…IEAQFELKYI (158 aa). Residues 159–330 enclose the OBG-type G domain; sequence ADVGLLGLPN…LLKDIFKDYK (172 aa). GTP is bound by residues 165-172, 190-194, 211-214, 281-284, and 311-313; these read GLPNAGKS, FTTLS, DIPG, NKID, and SGF. Positions 172 and 192 each coordinate Mg(2+). The OCT domain maps to 351–429; that stretch reads KVEKEQEDIV…RIQDVMFEIN (79 aa).

It belongs to the TRAFAC class OBG-HflX-like GTPase superfamily. OBG GTPase family. Monomer. It depends on Mg(2+) as a cofactor.

It is found in the cytoplasm. An essential GTPase which binds GTP, GDP and possibly (p)ppGpp with moderate affinity, with high nucleotide exchange rates and a fairly low GTP hydrolysis rate. Plays a role in control of the cell cycle, stress response, ribosome biogenesis and in those bacteria that undergo differentiation, in morphogenesis control. The polypeptide is GTPase Obg (Malacoplasma penetrans (strain HF-2) (Mycoplasma penetrans)).